Here is a 450-residue protein sequence, read N- to C-terminus: tRNA-2-methylthio-N(6)-dimethylallyladenosine synthase (450 aa).

Residues 7 to 127 (KRLYIKTYGC…LPELIARAHR (121 aa)) form the MTTase N-terminal domain. [4Fe-4S] cluster-binding residues include Cys-16, Cys-52, Cys-90, Cys-165, Cys-169, and Cys-172. The Radical SAM core domain maps to 151 to 378 (QVSGVSAFLT…NQLLDEQQKA (228 aa)). The region spanning 381–443 (ILQVGKTMPV…KMSLGGVLET (63 aa)) is the TRAM domain.

The protein belongs to the methylthiotransferase family. MiaB subfamily. Monomer. [4Fe-4S] cluster is required as a cofactor.

It is found in the cytoplasm. It catalyses the reaction N(6)-dimethylallyladenosine(37) in tRNA + (sulfur carrier)-SH + AH2 + 2 S-adenosyl-L-methionine = 2-methylsulfanyl-N(6)-dimethylallyladenosine(37) in tRNA + (sulfur carrier)-H + 5'-deoxyadenosine + L-methionine + A + S-adenosyl-L-homocysteine + 2 H(+). Functionally, catalyzes the methylthiolation of N6-(dimethylallyl)adenosine (i(6)A), leading to the formation of 2-methylthio-N6-(dimethylallyl)adenosine (ms(2)i(6)A) at position 37 in tRNAs that read codons beginning with uridine. This chain is tRNA-2-methylthio-N(6)-dimethylallyladenosine synthase, found in Caulobacter sp. (strain K31).